The primary structure comprises 337 residues: Putative NAC domain-containing protein 94 (337 aa).

The region spanning 20–191 is the NAC domain; it reads VLPGFRFHPT…AWAICRIFKK (172 aa).

Its subcellular location is the nucleus. This chain is Putative NAC domain-containing protein 94 (ANAC094), found in Arabidopsis thaliana (Mouse-ear cress).